The following is a 476-amino-acid chain: Cardiolipin synthase (476 aa).

2 consecutive transmembrane segments (helical) span residues 2-22 (HLFI…IIFI) and 31-51 (WAWI…YILF). 2 PLD phosphodiesterase domains span residues 207 to 234 (INYR…GDEY) and 389 to 416 (EKGF…DIRS). Residues histidine 212, lysine 214, aspartate 219, histidine 394, lysine 396, and aspartate 401 contribute to the active site.

Belongs to the phospholipase D family. Cardiolipin synthase subfamily.

Its subcellular location is the cell membrane. The enzyme catalyses 2 a 1,2-diacyl-sn-glycero-3-phospho-(1'-sn-glycerol) = a cardiolipin + glycerol. Catalyzes the reversible phosphatidyl group transfer from one phosphatidylglycerol molecule to another to form cardiolipin (CL) (diphosphatidylglycerol) and glycerol. This Clostridium perfringens (strain 13 / Type A) protein is Cardiolipin synthase (cls).